The following is a 571-amino-acid chain: Phosphomethylpyrimidine synthase (571 aa).

Residues Asn-201, Met-230, Tyr-259, His-295, 315 to 317 (SRG), 356 to 359 (DALR), and Glu-395 contribute to the substrate site. His-399 contacts Zn(2+). Tyr-422 lines the substrate pocket. His-463 provides a ligand contact to Zn(2+). [4Fe-4S] cluster contacts are provided by Cys-545, Cys-548, and Cys-553.

It belongs to the ThiC family. [4Fe-4S] cluster is required as a cofactor.

It catalyses the reaction 5-amino-1-(5-phospho-beta-D-ribosyl)imidazole + S-adenosyl-L-methionine = 4-amino-2-methyl-5-(phosphooxymethyl)pyrimidine + CO + 5'-deoxyadenosine + formate + L-methionine + 3 H(+). Its pathway is cofactor biosynthesis; thiamine diphosphate biosynthesis. Catalyzes the synthesis of the hydroxymethylpyrimidine phosphate (HMP-P) moiety of thiamine from aminoimidazole ribotide (AIR) in a radical S-adenosyl-L-methionine (SAM)-dependent reaction. This chain is Phosphomethylpyrimidine synthase, found in Chlorobium phaeovibrioides (strain DSM 265 / 1930) (Prosthecochloris vibrioformis (strain DSM 265)).